Reading from the N-terminus, the 365-residue chain is 1-aminocyclopropane-1-carboxylate oxidase homolog 1 (365 aa).

One can recognise a Fe2OG dioxygenase domain in the interval 212–313 (CTNSLLLLGH…RISVACFFSS (102 aa)). Residues H238, D240, and H294 each coordinate Fe cation.

The protein belongs to the iron/ascorbate-dependent oxidoreductase family. The cofactor is Fe cation.

The protein is 1-aminocyclopropane-1-carboxylate oxidase homolog 1 of Arabidopsis thaliana (Mouse-ear cress).